The chain runs to 503 residues: Potassium voltage-gated channel subfamily V member 1 (503 aa).

2 disordered regions span residues 1–20 (MDLS…DSGS) and 171–192 (KKDT…KGPC). The Cytoplasmic portion of the chain corresponds to 3–213 (LSPRNRPLLD…EKPGSSTAAR (211 aa)). Low complexity predominate over residues 10-20 (LLDSSSLDSGS). Residues 171–187 (KKDTDDQESQHESEQDF) show a composition bias toward basic and acidic residues. The helical transmembrane segment at 214 to 234 (IFGVISIIFVAVSIVNMALMS) threads the bilayer. The Extracellular segment spans residues 235-241 (AELSWLN). A helical transmembrane segment spans residues 242 to 262 (LQLLEILEYVCISWFTGEFVL). Over 263–279 (RFLCVKDRCHFLRKVPN) the chain is Cytoplasmic. The helical transmembrane segment at 280-300 (IIDLLAILPFYITLLVESLSG) threads the bilayer. The Extracellular segment spans residues 301–312 (SHTTQELENVGR). A helical; Voltage-sensor membrane pass occupies residues 313–334 (LVQVLRLLRALRMLKLGRHSTG). Residues 335 to 348 (LRSLGMTITQCYEE) are Cytoplasmic-facing. The helical transmembrane segment at 349–369 (VGLLLLFLSVGISIFSTIEYF) threads the bilayer. Positions 395–400 (TVGYGD) match the Selectivity filter motif. The chain crosses the membrane as a helical span at residues 410–430 (IVAFMCILSGILVLALPIAII). At 431-503 (NDRFSACYFT…RSSGGDDFWF (73 aa)) the chain is on the cytoplasmic side.

Belongs to the potassium channel family. V (TC 1.A.1.2) subfamily. Kv8.1/KCNV1 sub-subfamily. Heteromultimer with KCNB1 and KCNB2. Interacts with KCNC4 and KCND1.

Its subcellular location is the cell membrane. Potassium channel subunit that does not form functional channels by itself. Modulates KCNB1 and KCNB2 channel activity by shifting the threshold for inactivation to more negative values and by slowing the rate of inactivation. Can down-regulate the channel activity of KCNB1, KCNB2, KCNC4 and KCND1, possibly by trapping them in intracellular membranes. In Mus musculus (Mouse), this protein is Potassium voltage-gated channel subfamily V member 1 (Kcnv1).